The following is a 560-amino-acid chain: uncharacterized protein (560 aa).

Residues 1-17 (MEPKRKSGSLAKHDLPQ) are Cytoplasmic-facing. Residues 18-38 (FYLLIMLYLAQGIPVGLAFGT) traverse the membrane as a helical segment. At 39–54 (VPFLLKSLAKETSFTS) the chain is on the extracellular side. The chain crosses the membrane as a helical span at residues 55-75 (LGIFSMATYPYSLKIIWSPIV). Topologically, residues 76–88 (DSLYNKRIGRRRS) are cytoplasmic. The helical transmembrane segment at 89 to 109 (WIIPVQFVSGFVLWALGWCIS) threads the bilayer. Residues 110 to 139 (QGIIFDGVDDAFHNRGNGTLHSVSIKNLTW) lie on the Extracellular side of the membrane. The chain crosses the membrane as a helical span at residues 140-160 (WFGLLVFLCATQDIAVDGWAL). Residues 161-172 (TILSKESLSYAS) lie on the Cytoplasmic side of the membrane. A helical membrane pass occupies residues 173 to 193 (TAQTIGLNIGYFMSFTIFLSL). Residues 194 to 214 (NSSDFANKYFRNIPLDHGFIS) are Extracellular-facing. Residues 215–235 (LGGYMKFSGMLYIVITIYIIF) traverse the membrane as a helical segment. Topologically, residues 236 to 329 (CTKEKPYVEY…KLLEQGFKRE (94 aa)) are cytoplasmic. A helical membrane pass occupies residues 330–350 (DLAVTVLIDLPFEIIFGYYVV). Residues 351 to 374 (KWSSDKDPMIRDNRRLRNSTGTNK) are Extracellular-facing. Residues 375-395 (VIKFLVGDAGVLTPWLWGFLG) form a helical membrane-spanning segment. Topologically, residues 396-421 (RLAAAVLGSYVVKQFPKDGEISTGYF) are cytoplasmic. Residues 422–442 (CLVIFQHLLGSFMNTVQFIGI) traverse the membrane as a helical segment. The Extracellular portion of the chain corresponds to 443–521 (SAFHTRVADP…LNGTVTILRD (79 aa)). Residues 522-542 (GYYITNLICIVVGLFLYFGYL) traverse the membrane as a helical segment. The Cytoplasmic portion of the chain corresponds to 543-560 (KRKILHLQSLPISSWRCT).

Its subcellular location is the membrane. This is an uncharacterized protein from Saccharomyces cerevisiae (strain ATCC 204508 / S288c) (Baker's yeast).